The sequence spans 249 residues: 5'-nucleotidase SurE (249 aa).

Residues aspartate 8, aspartate 9, serine 39, and asparagine 91 each coordinate a divalent metal cation.

It belongs to the SurE nucleotidase family. It depends on a divalent metal cation as a cofactor.

Its subcellular location is the cytoplasm. The enzyme catalyses a ribonucleoside 5'-phosphate + H2O = a ribonucleoside + phosphate. Nucleotidase that shows phosphatase activity on nucleoside 5'-monophosphates. The polypeptide is 5'-nucleotidase SurE (Azotobacter vinelandii (strain DJ / ATCC BAA-1303)).